Consider the following 423-residue polypeptide: Methionine aminopeptidase 2 (423 aa).

Residues 1–17 (MTDVIDAKPEEAKKVPP) are compositionally biased toward basic and acidic residues. The interval 1-89 (MTDVIDAKPE…IQPYKDDNAY (89 aa)) is disordered. Residues 18–29 (EVEDEDSGDESA) are compositionally biased toward acidic residues. The span at 41–54 (KKKKKKKKPKKKKK) shows a compositional bias: basic residues. Position 176 (H176) interacts with substrate. A divalent metal cation is bound by residues D196, D207, and H276. Position 284 (H284) interacts with substrate. Residues E309 and E404 each coordinate a divalent metal cation.

It belongs to the peptidase M24A family. Methionine aminopeptidase eukaryotic type 2 subfamily. Requires Co(2+) as cofactor. It depends on Zn(2+) as a cofactor. Mn(2+) serves as cofactor. The cofactor is Fe(2+).

The protein resides in the cytoplasm. It catalyses the reaction Release of N-terminal amino acids, preferentially methionine, from peptides and arylamides.. Functionally, cotranslationally removes the N-terminal methionine from nascent proteins. The N-terminal methionine is often cleaved when the second residue in the primary sequence is small and uncharged (Met-Ala-, Cys, Gly, Pro, Ser, Thr, or Val). In Schizophyllum commune (strain H4-8 / FGSC 9210) (Split gill fungus), this protein is Methionine aminopeptidase 2.